Here is a 946-residue protein sequence, read N- to C-terminus: Probable leucine-rich repeat receptor-like protein kinase At5g49770 (946 aa).

Residues 1-25 (MKMSSRIGLFKLLILLFFQIYSVYA) form the signal peptide. Residues 26 to 561 (FTDGSDFTAL…LEDSKTVSMK (536 aa)) lie on the Extracellular side of the membrane. 14 LRR repeats span residues 67-91 (DNRV…ISTL), 92-116 (SELQ…IGNL), 118-140 (KLTF…IGNL), 141-164 (EQLT…MGRL), 166-191 (KLYW…SLPG), 195-219 (LLQT…LFSS), 221-244 (MTLL…LGLV), 245-268 (QNLT…LNNL), 269-293 (TNLQ…SLTS), 295-314 (YTLD…SWIP), 316-340 (LNSL…LFSP), 342-365 (QLQT…NYSK), 367-387 (LDFV…ANNP), and 389-407 (NVML…QLSG). N246, N267, and N287 each carry an N-linked (GlcNAc...) asparagine glycan. N-linked (GlcNAc...) asparagine glycans are attached at residues N354 and N362. N-linked (GlcNAc...) asparagine glycosylation is found at N415, N460, N489, and N514. The chain crosses the membrane as a helical span at residues 562–582 (VIIGVVVGVVVLLLLLALAGI). Residues 583–946 (YALRQKKRAQ…YTGVFPTPKP (364 aa)) lie on the Cytoplasmic side of the membrane. The Protein kinase domain occupies 634–908 (FSDANDVGGG…EVVQELESIL (275 aa)). ATP is bound by residues 640–648 (VGGGGYGQV) and K662. D758 functions as the Proton acceptor in the catalytic mechanism. Positions 919-946 (SATYEEASGDPYGRDSFEYTGVFPTPKP) are disordered.

This sequence belongs to the protein kinase superfamily. Ser/Thr protein kinase family.

The protein resides in the membrane. It carries out the reaction L-seryl-[protein] + ATP = O-phospho-L-seryl-[protein] + ADP + H(+). The catalysed reaction is L-threonyl-[protein] + ATP = O-phospho-L-threonyl-[protein] + ADP + H(+). The polypeptide is Probable leucine-rich repeat receptor-like protein kinase At5g49770 (Arabidopsis thaliana (Mouse-ear cress)).